The following is a 479-amino-acid chain: MGQLISFFQDIPIFFEEALNVALAVVTLLAIIKGIVNVWKSGILQLFVFLVLAGRSCSFKVGHHTNFESFTVKLGGVFHELPSLCRVNNSYSLIRLSHNSNQALSVEYVDVHPVLCSSSPTILDNYTQCIKGSPEFDWILGWTIKGLGHDFLRDPRICCEPKKTTNAEFTFQLNLTDSPETHHYRSKIEVGIRHLFGNYITNDSYSKMSVVMRNTTWEGQCSNSHVNTLRFLVKNAGYLVGRKPLAFFSWSLSDPKGNDMPGGYCLERWMLVAGDLKCFGNTAVAKCNLNHDSEFCDMLRLFDFNKNAIEKLNNQTKTAVNMLTHSINSLISDNLLMRNKLKEILKVPYCNYTRFWYINHTKSGEHSLPRCWLVSNGSYLNESDFRNEWILESDHLIAEMLSKEYQDRQGKTPLTLVDLCFWSAIFFTTSLFLHLVGFPTHRHIQGDPCPLPHRLDRNGACRCGRFQKLGKQVTWKRKH.

Gly2 carries N-myristoyl glycine; by host lipidation. Residues 2–17 (GQLISFFQDIPIFFEE) are Extracellular-facing. A helical membrane pass occupies residues 18–32 (ALNVALAVVTLLAII). A topological domain (cytoplasmic) is located at residue Lys33. Residues 34–53 (GIVNVWKSGILQLFVFLVLA) traverse the membrane as a helical segment. Extracellular segments lie at residues 54–58 (GRSCS) and 59–418 (FKVG…TLVD). Cys57 serves as a coordination point for Zn(2+). Cystine bridges form between Cys85/Cys221, Cys265/Cys278, and Cys287/Cys296. Asn88, Asn125, Asn174, Asn202, and Asn214 each carry an N-linked (GlcNAc...) asparagine; by host glycan. 5 N-linked (GlcNAc...) asparagine; by host glycosylation sites follow: Asn314, Asn351, Asn359, Asn376, and Asn381. Cys350 and Cys371 are oxidised to a cystine. Residues 419–439 (LCFWSAIFFTTSLFLHLVGFP) traverse the membrane as a helical segment. Residues 440-479 (THRHIQGDPCPLPHRLDRNGACRCGRFQKLGKQVTWKRKH) lie on the Cytoplasmic side of the membrane. Zn(2+) is bound by residues His441, His443, Cys449, His453, Cys461, Cys463, and His479.

The protein belongs to the arenaviridae GPC protein family. In terms of assembly, homotetramer; disulfide-linked. Homotetramer. GP2 homotetramers bind through ionic interactions with GP1 homotetramers to form the GP complex together with the stable signal peptide. The GP-C polyprotein interacts with the host protease MBTPS1/SKI-1 resulting in the polyprotein processing. Post-translationally, specific enzymatic cleavages in vivo yield mature proteins. GP-C polyprotein is cleaved in the endoplasmic reticulum by the host protease MBTPS1. Only cleaved glycoprotein is incorporated into virions. In terms of processing, the SSP remains stably associated with the GP complex following cleavage by signal peptidase and plays crucial roles in the trafficking of GP through the secretory pathway. Myristoylation is necessary for GP2-mediated fusion activity.

The protein resides in the virion membrane. It localises to the host endoplasmic reticulum membrane. It is found in the host Golgi apparatus membrane. Its subcellular location is the host cell membrane. Its function is as follows. Interacts with the host receptor. Mediates virus attachment to host TFRC. This attachment induces virion internalization predominantly through clathrin-mediated endocytosis. Class I viral fusion protein that directs fusion of viral and host endosomal membranes, leading to delivery of the nucleocapsid into the cytoplasm. Membrane fusion is mediated by irreversible conformational changes induced upon acidification in the endosome. In terms of biological role, stable signal peptide (SSP): cleaved and functions as a signal peptide. In addition, it is also retained as the third component of the GP complex. The SSP is required for efficient glycoprotein expression, post-translational maturation cleavage of GP1 and GP2, glycoprotein transport to the cell surface plasma membrane, formation of infectious virus particles, and acid pH-dependent glycoprotein-mediated cell fusion. This is Pre-glycoprotein polyprotein GP complex from Homo sapiens (Human).